Consider the following 152-residue polypeptide: 2-C-methyl-D-erythritol 2,4-cyclodiphosphate synthase (152 aa).

A divalent metal cation contacts are provided by Asp8 and His10. 4-CDP-2-C-methyl-D-erythritol 2-phosphate is bound by residues Asp8–His10 and His34–Ser35. His42 serves as a coordination point for a divalent metal cation. 4-CDP-2-C-methyl-D-erythritol 2-phosphate is bound by residues Asp56–Gly58 and Phe61–Asp65.

It belongs to the IspF family. As to quaternary structure, homotrimer. The cofactor is a divalent metal cation.

The enzyme catalyses 4-CDP-2-C-methyl-D-erythritol 2-phosphate = 2-C-methyl-D-erythritol 2,4-cyclic diphosphate + CMP. It functions in the pathway isoprenoid biosynthesis; isopentenyl diphosphate biosynthesis via DXP pathway; isopentenyl diphosphate from 1-deoxy-D-xylulose 5-phosphate: step 4/6. Involved in the biosynthesis of isopentenyl diphosphate (IPP) and dimethylallyl diphosphate (DMAPP), two major building blocks of isoprenoid compounds. Catalyzes the conversion of 4-diphosphocytidyl-2-C-methyl-D-erythritol 2-phosphate (CDP-ME2P) to 2-C-methyl-D-erythritol 2,4-cyclodiphosphate (ME-CPP) with a corresponding release of cytidine 5-monophosphate (CMP). The protein is 2-C-methyl-D-erythritol 2,4-cyclodiphosphate synthase of Thermus thermophilus (strain ATCC BAA-163 / DSM 7039 / HB27).